A 669-amino-acid polypeptide reads, in one-letter code: uncharacterized protein (669 aa).

Transmembrane regions (helical) follow at residues 9–29 (PLVI…IFIA), 48–68 (FSWF…ILSV), 87–107 (FLSW…MFFG), 139–159 (WGIH…YFGF), 186–206 (AIDV…LGFG), 224–244 (SFAL…FSAI), 259–279 (LTLA…LYLL), 314–334 (WTVL…LFIA), 345–365 (FIFG…TVFG), 397–417 (YLPL…LFFI), 444–464 (AIMW…SGGL), and 470–490 (MTLI…FSLW).

The protein belongs to the BCCT transporter (TC 2.A.15) family.

The protein localises to the cell inner membrane. This is an uncharacterized protein from Haemophilus influenzae (strain ATCC 51907 / DSM 11121 / KW20 / Rd).